A 180-amino-acid polypeptide reads, in one-letter code: Large ribosomal subunit protein uL5 (180 aa).

This sequence belongs to the universal ribosomal protein uL5 family. In terms of assembly, part of the 50S ribosomal subunit; part of the 5S rRNA/L5/L18/L25 subcomplex. Contacts the 5S rRNA and the P site tRNA. Forms a bridge to the 30S subunit in the 70S ribosome.

In terms of biological role, this is one of the proteins that bind and probably mediate the attachment of the 5S RNA into the large ribosomal subunit, where it forms part of the central protuberance. In the 70S ribosome it contacts protein S13 of the 30S subunit (bridge B1b), connecting the 2 subunits; this bridge is implicated in subunit movement. Contacts the P site tRNA; the 5S rRNA and some of its associated proteins might help stabilize positioning of ribosome-bound tRNAs. The polypeptide is Large ribosomal subunit protein uL5 (Streptococcus pyogenes serotype M49 (strain NZ131)).